A 247-amino-acid chain; its full sequence is Triosephosphate isomerase (247 aa).

Substrate contacts are provided by N10 and K12. H94 acts as the Electrophile in catalysis. The active-site Proton acceptor is the E164.

Belongs to the triosephosphate isomerase family. As to quaternary structure, homodimer.

The protein resides in the cytoplasm. It catalyses the reaction D-glyceraldehyde 3-phosphate = dihydroxyacetone phosphate. The catalysed reaction is dihydroxyacetone phosphate = methylglyoxal + phosphate. Its pathway is carbohydrate biosynthesis; gluconeogenesis. It participates in carbohydrate degradation; glycolysis; D-glyceraldehyde 3-phosphate from glycerone phosphate: step 1/1. Functionally, triosephosphate isomerase is an extremely efficient metabolic enzyme that catalyzes the interconversion between dihydroxyacetone phosphate (DHAP) and D-glyceraldehyde-3-phosphate (G3P) in glycolysis and gluconeogenesis. In terms of biological role, it is also responsible for the non-negligible production of methylglyoxal a reactive cytotoxic side-product that modifies and can alter proteins, DNA and lipids. The protein is Triosephosphate isomerase (tpi-1) of Caenorhabditis elegans.